Here is a 313-residue protein sequence, read N- to C-terminus: Biotin synthase (313 aa).

One can recognise a Radical SAM core domain in the interval 28–258 (NFGNDIELCS…LFPQARLRLS (231 aa)). [4Fe-4S] cluster is bound by residues cysteine 46, cysteine 50, and cysteine 53. [2Fe-2S] cluster-binding residues include cysteine 90, cysteine 121, cysteine 181, and arginine 256.

The protein belongs to the radical SAM superfamily. Biotin synthase family. Homodimer. [4Fe-4S] cluster is required as a cofactor. [2Fe-2S] cluster serves as cofactor.

It carries out the reaction (4R,5S)-dethiobiotin + (sulfur carrier)-SH + 2 reduced [2Fe-2S]-[ferredoxin] + 2 S-adenosyl-L-methionine = (sulfur carrier)-H + biotin + 2 5'-deoxyadenosine + 2 L-methionine + 2 oxidized [2Fe-2S]-[ferredoxin]. It participates in cofactor biosynthesis; biotin biosynthesis; biotin from 7,8-diaminononanoate: step 2/2. Functionally, catalyzes the conversion of dethiobiotin (DTB) to biotin by the insertion of a sulfur atom into dethiobiotin via a radical-based mechanism. In Francisella tularensis subsp. holarctica (strain FTNF002-00 / FTA), this protein is Biotin synthase.